A 122-amino-acid polypeptide reads, in one-letter code: Ribosomal protein eL22-like 1 (122 aa).

A phosphoserine mark is found at Ser-112, Ser-118, and Ser-120.

This sequence belongs to the eukaryotic ribosomal protein eL22 family.

In Mus musculus (Mouse), this protein is Ribosomal protein eL22-like 1 (Rpl22l1).